Here is a 242-residue protein sequence, read N- to C-terminus: Platelet-derived growth factor subunit B (242 aa).

The first 20 residues, 1–20 (MNRCWALFLSLCCYLRLVSA), serve as a signal peptide directing secretion. Residues 21-81 (EGDPIPEELY…ELESLSRGRR (61 aa)) constitute a propeptide, removed in mature form. An N-linked (GlcNAc...) asparagine glycan is attached at N63. 3 cysteine pairs are disulfide-bonded: C97–C141, C130–C178, and C134–C180. Positions 219–232 (PPKGKHRKFKHTHD) are enriched in basic residues. A disordered region spans residues 219–242 (PPKGKHRKFKHTHDKKALKETLGA). Over residues 233–242 (KKALKETLGA) the composition is skewed to basic and acidic residues.

It belongs to the PDGF/VEGF growth factor family. In terms of assembly, antiparallel homodimer; disulfide-linked. Antiparallel heterodimer with PDGFA; disulfide-linked. The PDGFB homodimer interacts with PDGFRA and PDGFRB homodimers, and with heterodimers formed by PDGFRA and PDGFRB. The heterodimer composed of PDGFA and PDGFB interacts with PDGFRB homodimers, and with heterodimers formed by PDGFRA and PDGFRB. Interacts with XLKD1. Interacts with LRP1. Interacts with SORL1 (via the N-terminal ectodomain). Interacts with CD82; this interaction inhibits PDGFB-mediated signaling pathway.

It localises to the secreted. Its function is as follows. Growth factor that plays an essential role in the regulation of embryonic development, cell proliferation, cell migration, survival and chemotaxis. Potent mitogen for cells of mesenchymal origin. Required for normal proliferation and recruitment of pericytes and vascular smooth muscle cells in the central nervous system, skin, lung, heart and placenta. Required for normal blood vessel development, and for normal development of kidney glomeruli. Plays an important role in wound healing. Signaling is modulated by the formation of heterodimers with PDGFA. In Canis lupus familiaris (Dog), this protein is Platelet-derived growth factor subunit B (PDGFB).